A 422-amino-acid chain; its full sequence is Osteomodulin (422 aa).

An N-terminal signal peptide occupies residues 1 to 20; sequence MGFSSLVCVLFFFLGVKVYC. A propeptide spanning residues 21–27 is cleaved from the precursor; it reads QYESYQW. Sulfotyrosine occurs at positions 22, 25, 31, 39, 51, and 77. Residues 53–91 form the LRRNT domain; it reads APFHQHTLGCASECFCPPNFPSSMYCDNRKLKTIPNIPA. 11 LRR repeats span residues 92–113, 116–129, 142–164, 165–184, 187–207, 213–233, 234–255, 258–280, 281–294, 301–322, and 331–353; these read HIQQ…SFIN, HLKE…KIKS, NLLQ…PKSL, ERIF…AVNG, NLTM…QEKV, KLMQ…GLPS, SLMY…YFNK, KLHA…FNLS, NLIE…KLKQ, NLEH…VMCP, and HLTH…IFLC. N-linked (GlcNAc...) asparagine glycosylation is found at N113 and N121. Residue N187 is glycosylated (N-linked (GlcNAc...) asparagine). 2 N-linked (GlcNAc...) asparagine glycosylation sites follow: N242 and N278. N-linked (GlcNAc...) asparagine glycosylation occurs at N316. C321 and C353 form a disulfide bridge. Residues 385 to 422 are disordered; the sequence is DDGDSEDHDDHHEGPEEEGTEENIDAHYYGSQEWQETI. Sulfotyrosine occurs at positions 412 and 413.

Belongs to the small leucine-rich proteoglycan (SLRP) family. SLRP class II subfamily. As to quaternary structure, binds the alpha(V)beta(3)-integrin. The N-terminus is blocked. Post-translationally, glycosylated; contains keratan sulfate. In terms of processing, sulfated on tyrosine residue(s). Bone specific (at protein level).

The protein resides in the secreted. It is found in the extracellular space. Its subcellular location is the extracellular matrix. In terms of biological role, may be implicated in biomineralization processes. Has a function in binding of osteoblasts via the alpha(V)beta(3)-integrin. The chain is Osteomodulin (OMD) from Bos taurus (Bovine).